Here is a 364-residue protein sequence, read N- to C-terminus: Mannonate dehydratase (364 aa).

Belongs to the mannonate dehydratase family. Fe(2+) is required as a cofactor. It depends on Mn(2+) as a cofactor.

The catalysed reaction is D-mannonate = 2-dehydro-3-deoxy-D-gluconate + H2O. The protein operates within carbohydrate metabolism; pentose and glucuronate interconversion. Functionally, catalyzes the dehydration of D-mannonate. This chain is Mannonate dehydratase, found in Endomicrobium trichonymphae.